We begin with the raw amino-acid sequence, 379 residues long: Putative clathrin assembly protein At1g68110 (379 aa).

The ENTH domain maps to 26-158 (NSSYRNADLE…SFLSDQIHRL (133 aa)).

The protein localises to the membrane. The protein resides in the clathrin-coated pit. Its subcellular location is the golgi apparatus. It is found in the cytoplasmic vesicle. It localises to the clathrin-coated vesicle. The chain is Putative clathrin assembly protein At1g68110 from Arabidopsis thaliana (Mouse-ear cress).